A 246-amino-acid chain; its full sequence is Dihydroorotate dehydrogenase B (NAD(+)), electron transfer subunit (246 aa).

An FAD-binding FR-type domain is found at glutamate 3–valine 97. Residues arginine 50–serine 53 and glycine 72–threonine 73 contribute to the FAD site. The [2Fe-2S] cluster site is built by cysteine 211, cysteine 216, cysteine 219, and cysteine 231.

Belongs to the PyrK family. Heterotetramer of 2 PyrK and 2 PyrD type B subunits. It depends on [2Fe-2S] cluster as a cofactor. Requires FAD as cofactor.

Its pathway is pyrimidine metabolism; UMP biosynthesis via de novo pathway; orotate from (S)-dihydroorotate (NAD(+) route): step 1/1. Functionally, responsible for channeling the electrons from the oxidation of dihydroorotate from the FMN redox center in the PyrD type B subunit to the ultimate electron acceptor NAD(+). This Clostridium acetobutylicum (strain ATCC 824 / DSM 792 / JCM 1419 / IAM 19013 / LMG 5710 / NBRC 13948 / NRRL B-527 / VKM B-1787 / 2291 / W) protein is Dihydroorotate dehydrogenase B (NAD(+)), electron transfer subunit.